We begin with the raw amino-acid sequence, 233 residues long: Pre-hexon-linking protein VIII (233 aa).

T64 is modified (phosphothreonine; by host). Positions 112 to 163 (ARHSFRYKGRTEPYPSPAIKRVLIRGKGIQLNDEVTSPLGVRPDGVFQLGGS) are excised as a propeptide. S180 bears the Phosphoserine; by host mark.

It belongs to the adenoviridae hexon-linking protein family. Interacts with the peripentonal hexons as well as the hexons in the facets. Part of a complex composed of the core-capsid bridging protein, the endosome lysis protein VI and the hexon-linking protein VIII; these interactions bridge the virus core to the capsid. Post-translationally, cleaved by the viral protease during virion maturation. May cause the middle segment to be shed from the capsid.

The protein resides in the virion. The protein localises to the host nucleus. Functionally, structural component of the virion that acts as a cement protein on the capsid interior and which glue the peripentonal hexons and group-of-nine hexons together. This is Pre-hexon-linking protein VIII from Homo sapiens (Human).